A 123-amino-acid polypeptide reads, in one-letter code: Small ribosomal subunit protein uS11 (123 aa).

Belongs to the universal ribosomal protein uS11 family. In terms of assembly, part of the 30S ribosomal subunit. Interacts with proteins S7 and S18. Binds to IF-3.

Located on the platform of the 30S subunit, it bridges several disparate RNA helices of the 16S rRNA. Forms part of the Shine-Dalgarno cleft in the 70S ribosome. The polypeptide is Small ribosomal subunit protein uS11 (Coxiella burnetii (strain CbuK_Q154) (Coxiella burnetii (strain Q154))).